Here is a 161-residue protein sequence, read N- to C-terminus: Nucleotide-binding protein PputW619_0959 (161 aa).

Belongs to the YajQ family.

In terms of biological role, nucleotide-binding protein. The polypeptide is Nucleotide-binding protein PputW619_0959 (Pseudomonas putida (strain W619)).